We begin with the raw amino-acid sequence, 467 residues long: Constitutive acid phosphatase (467 aa).

An N-terminal signal peptide occupies residues Met-1–Ala-17. His-75 functions as the Nucleophile in the catalytic mechanism. Asn-97, Asn-103, Asn-162, Asn-192, Asn-250, and Asn-315 each carry an N-linked (GlcNAc...) asparagine glycan. The active-site Proton donor is the Asp-338. Residues Asn-356, Asn-390, Asn-439, Asn-445, Asn-456, and Asn-461 are each glycosylated (N-linked (GlcNAc...) asparagine).

Belongs to the histidine acid phosphatase family.

It catalyses the reaction a phosphate monoester + H2O = an alcohol + phosphate. This chain is Constitutive acid phosphatase (PHO3), found in Saccharomyces cerevisiae (strain ATCC 204508 / S288c) (Baker's yeast).